Consider the following 477-residue polypeptide: Protein U33 (477 aa).

The protein belongs to the herpesviridae UL49 family.

This chain is Protein U33 (U33), found in Homo sapiens (Human).